Here is a 507-residue protein sequence, read N- to C-terminus: Transcription factor SOX-9 (507 aa).

Disordered regions lie at residues methionine 1–aspartate 67 and arginine 160–valine 250. The span at serine 30–serine 41 shows a compositional bias: low complexity. Over residues aspartate 42–threonine 52 the composition is skewed to polar residues. Basic and acidic residues-rich tracts occupy residues glycine 56–aspartate 67 and arginine 160–tyrosine 174. Residues glutamate 63–proline 103 are dimerization (DIM). Positions glutamate 63 to proline 103 are PQA. Serine 64 carries the post-translational modification Phosphoserine. A DNA-binding region (HMG box) is located at residues valine 105–lysine 173. Serine 211 carries the phosphoserine modification. A transactivation domain (TAM) region spans residues proline 224–proline 307. 2 short sequence motifs (9aaTAD) span residues isoleucine 275–serine 284 and aspartate 290–leucine 298. Positions tryptophan 335–serine 429 are disordered. Over residues alanine 341–glutamine 369 the composition is skewed to pro residues. Polar residues predominate over residues histidine 378–proline 420. The interval arginine 392–proline 507 is transactivation domain (TAC). Lysine 396 is covalently cross-linked (Glycyl lysine isopeptide (Lys-Gly) (interchain with G-Cter in ubiquitin)). The 9aaTAD 3 motif lies at serine 458 to tyrosine 466. The tract at residues proline 477 to proline 507 is disordered. Positions glycine 483–proline 507 are enriched in polar residues.

In terms of assembly, homodimer; homodimerization is required for activity. Interacts (via C-terminus) with ZNF219; forming a complex that binds to the COL2A1 promoter and activates COL2A1 expression. Interacts with DDRGK1. Interacts with EP300/p300. Interacts with beta-catenin (CTNNB1); inhibiting CTNNB1 activity by competing with the binding sites of TCF/LEF within CTNNB1. Acetylated; acetylation impairs nuclear localization and ability to transactivate expression of target genes. Deacetylated by SIRT1. In terms of processing, phosphorylation at Ser-64 and Ser-211 by PKA increases transcriptional activity and may help delay chondrocyte maturation downstream of PTHLH/PTHrP signaling. Phosphorylation at either Ser-64 or Ser-211 is required for sumoylation, but phosphorylation is not dependent on sumoylation. Phosphorylated on tyrosine residues; tyrosine dephosphorylation by PTPN11/SHP2 blocks SOX9 phosphorylation by PKA and subsequent SUMOylation. Post-translationally, sumoylated; phosphorylation at either Ser-64 or Ser-211 is required for sumoylation. Sumoylation is induced by BMP signaling pathway. Ubiquitinated; ubiquitination leads to proteasomal degradation and is negatively regulated by DDRGK1.

Its subcellular location is the nucleus. Its function is as follows. Transcription factor that plays a key role in chondrocytes differentiation and skeletal development. Specifically binds the 5'-ACAAAG-3' DNA motif present in enhancers and super-enhancers and promotes expression of genes important for chondrogenesis, including cartilage matrix protein-coding genes COL2A1, COL4A2, COL9A1, COL11A2 and ACAN, SOX5 and SOX6. Also binds to some promoter regions. Plays a central role in successive steps of chondrocyte differentiation. Absolutely required for precartilaginous condensation, the first step in chondrogenesis during which skeletal progenitors differentiate into prechondrocytes. Together with SOX5 and SOX6, required for overt chondrogenesis when condensed prechondrocytes differentiate into early stage chondrocytes, the second step in chondrogenesis. Later, required to direct hypertrophic maturation and block osteoblast differentiation of growth plate chondrocytes: maintains chondrocyte columnar proliferation, delays prehypertrophy and then prevents osteoblastic differentiation of chondrocytes by lowering beta-catenin (CTNNB1) signaling and RUNX2 expression. Also required for chondrocyte hypertrophy, both indirectly, by keeping the lineage fate of chondrocytes, and directly, by remaining present in upper hypertrophic cells and transactivating COL10A1 along with MEF2C. Low lipid levels are the main nutritional determinant for chondrogenic commitment of skeletal progenitor cells: when lipids levels are low, FOXO (FOXO1 and FOXO3) transcription factors promote expression of SOX9, which induces chondrogenic commitment and suppresses fatty acid oxidation. Mechanistically, helps, but is not required, to remove epigenetic signatures of transcriptional repression and deposit active promoter and enhancer marks at chondrocyte-specific genes. Acts in cooperation with the Hedgehog pathway-dependent GLI (GLI1 and GLI3) transcription factors. In addition to cartilage development, also acts as a regulator of proliferation and differentiation in epithelial stem/progenitor cells: involved in the lung epithelium during branching morphogenesis, by balancing proliferation and differentiation and regulating the extracellular matrix. Controls epithelial branching during kidney development. This chain is Transcription factor SOX-9, found in Rattus norvegicus (Rat).